Consider the following 435-residue polypeptide: 3-ketoacyl-CoA thiolase (435 aa).

Cys-98 acts as the Acyl-thioester intermediate in catalysis. Active-site proton acceptor residues include His-391 and Cys-421.

This sequence belongs to the thiolase-like superfamily. Thiolase family. As to quaternary structure, heterotetramer of two alpha chains (FadJ) and two beta chains (FadI).

The protein resides in the cytoplasm. The catalysed reaction is an acyl-CoA + acetyl-CoA = a 3-oxoacyl-CoA + CoA. It participates in lipid metabolism; fatty acid beta-oxidation. Its function is as follows. Catalyzes the final step of fatty acid oxidation in which acetyl-CoA is released and the CoA ester of a fatty acid two carbons shorter is formed. The sequence is that of 3-ketoacyl-CoA thiolase from Colwellia psychrerythraea (strain 34H / ATCC BAA-681) (Vibrio psychroerythus).